The chain runs to 108 residues: Ig kappa chain V-VI region NQ2-6.1 (108 aa).

The interval glutamine 1–cysteine 23 is framework-1. Cysteine 23 and cysteine 87 are disulfide-bonded. The segment at serine 24–tyrosine 33 is complementarity-determining-1. The segment at tryptophan 34 to tyrosine 48 is framework-2. The segment at aspartate 49–serine 55 is complementarity-determining-2. Residues glycine 56–cysteine 87 are framework-3. A complementarity-determining-3 region spans residues glutamine 88–threonine 98. The framework-4 stretch occupies residues phenylalanine 99–lysine 108.

The sequence is that of Ig kappa chain V-VI region NQ2-6.1 from Mus musculus (Mouse).